The sequence spans 325 residues: Peroxidase 45 (325 aa).

The N-terminal stretch at 1 to 25 (MEKNTSQTIFSNFFLLLLLSSCVSA) is a signal peptide. 4 disulfide bridges follow: cysteine 36–cysteine 115, cysteine 69–cysteine 74, cysteine 121–cysteine 321, and cysteine 200–cysteine 232. Catalysis depends on histidine 67, which acts as the Proton acceptor. Ca(2+) contacts are provided by aspartate 68, valine 71, glycine 73, aspartate 75, and serine 77. Proline 163 is a substrate binding site. Histidine 193 is a heme b binding site. Ca(2+) is bound at residue threonine 194. The Ca(2+) site is built by aspartate 245, serine 248, and aspartate 253.

This sequence belongs to the peroxidase family. Classical plant (class III) peroxidase subfamily. Requires heme b as cofactor. Ca(2+) is required as a cofactor. Slightly expressed in roots.

The protein resides in the secreted. It catalyses the reaction 2 a phenolic donor + H2O2 = 2 a phenolic radical donor + 2 H2O. In terms of biological role, removal of H(2)O(2), oxidation of toxic reductants, biosynthesis and degradation of lignin, suberization, auxin catabolism, response to environmental stresses such as wounding, pathogen attack and oxidative stress. These functions might be dependent on each isozyme/isoform in each plant tissue. This is Peroxidase 45 (PER45) from Arabidopsis thaliana (Mouse-ear cress).